The chain runs to 610 residues: MSKIIGIDLGTTNSCVTVLEGDEPKVIQNPEGSRTTPSVVAFKNGETQVGEVAKRQAITNPNTVQSIKRHMGTDYKVDIEGKSYTPQEISAMILQNLKNTAESYLGEKVDKAVITVPAYFNDAERQATKDAGKIAGLEVERIINEPTAAALAYGLDKTDKDEKVLVFDLGGGTFDVSILELGDGVFEVLSTAGDNKLGGDDFDQVIIDYLVAEFKKENGVDLSQDKMALQRLKDAAEKAKKDLSGVSQTQISLPFISAGENGPLHLEVNLTRSKFEELSDSLIRRTMEPTRQAMKDAGLTNSDIDEVILVGGSTRIPAVQEAVKKEIGKEPNKGVNPDEVVAMGAAIQGGVITGDVKDVVLLDVTPLSLGIEILGGRMNTLIERNTTIPTSKSQIYSTAVDNQPSVDVHVLQGERPMAADNKTLGRFQLTDIPPAERGKPQIEVTFDIDKNGIVNVTAKDLGTNKEQRITIQSSSSLSDEEIDRMVKDAEVNAEADKKRREEVDLRNEADSLVFQVEKTLTDLGENIGEEDKKSAEEKKDALKTALEGQDIEDIKSKKEELEKVIQELSAKVYEQAAQQQQQAQGANAGQNNDSTVEDAEFKEVKDDDKK.

A Phosphothreonine; by autocatalysis modification is found at T173. 2 disordered regions span residues 525–544 (ENIGEEDKKSAEEKKDALKT) and 576–610 (AAQQQQQAQGANAGQNNDSTVEDAEFKEVKDDDKK). Residues 529–542 (EEDKKSAEEKKDAL) are compositionally biased toward basic and acidic residues. The span at 576–592 (AAQQQQQAQGANAGQNN) shows a compositional bias: low complexity. The segment covering 599 to 610 (AEFKEVKDDDKK) has biased composition (basic and acidic residues).

The protein belongs to the heat shock protein 70 family.

In terms of biological role, acts as a chaperone. The sequence is that of Chaperone protein DnaK from Staphylococcus aureus (strain Mu3 / ATCC 700698).